The sequence spans 481 residues: MAIVNQPRTLAEKVWSDHVVVAGTGEGAAREPDLIYIDLHLVHEVTSPQAFDGLRLAGRPVRRPDLTIATEDHNVPTVDIDKPIADPVSRTQVETLRRNCAEFGIRLHPMGDVEQGIVHIIGPQLGLTQPGMTVVCGDSHTSTHGAFGALAMGIGTSEVEHVLATQTLPLRPFKTMAVNVDGQLPPGVSAKDIILAVIAKIGTGGGQGHVIEYRGSAIESLSMEGRMTVCNMSIEAGARAGMIAPDETTFEFLRGRPHAPKGAEWDAAVAVWRQLRTDEGAQFDTEIYIDASTLSPFVTWGTNPGQGVPLSDPVPDPELMFDEAERQAAEKALAYMDLRAGTPMRQIPVDTVFVGSCTNGRIEDLRVVADILRGRRVADNVRMLVVPGSMRVRAQAESEGLGEIFTAAGAEWRQAGCSMCLGMNPDQLAPGERCASTSNRNFEGRQGKGGRTHLVSPAVAAATAVRGTLSSPADLAAEPTH.

[4Fe-4S] cluster-binding residues include Cys-357, Cys-417, and Cys-420.

Belongs to the aconitase/IPM isomerase family. LeuC type 1 subfamily. Heterodimer of LeuC and LeuD. Requires [4Fe-4S] cluster as cofactor.

It catalyses the reaction (2R,3S)-3-isopropylmalate = (2S)-2-isopropylmalate. It participates in amino-acid biosynthesis; L-leucine biosynthesis; L-leucine from 3-methyl-2-oxobutanoate: step 2/4. Its function is as follows. Catalyzes the isomerization between 2-isopropylmalate and 3-isopropylmalate, via the formation of 2-isopropylmaleate. The chain is 3-isopropylmalate dehydratase large subunit from Mycolicibacterium vanbaalenii (strain DSM 7251 / JCM 13017 / BCRC 16820 / KCTC 9966 / NRRL B-24157 / PYR-1) (Mycobacterium vanbaalenii).